The sequence spans 448 residues: Cysteine--tRNA ligase (448 aa).

Cys-27 is a binding site for Zn(2+). The 'HIGH' region motif lies at 29-39 (PTVYNYIHVGN). Zn(2+) is bound by residues Cys-210, His-235, and Glu-239. Residues 267 to 271 (KMSKS) carry the 'KMSKS' region motif. Lys-270 is an ATP binding site.

The protein belongs to the class-I aminoacyl-tRNA synthetase family. In terms of assembly, monomer. Zn(2+) serves as cofactor.

It is found in the cytoplasm. It carries out the reaction tRNA(Cys) + L-cysteine + ATP = L-cysteinyl-tRNA(Cys) + AMP + diphosphate. This Lactococcus lactis subsp. lactis (strain IL1403) (Streptococcus lactis) protein is Cysteine--tRNA ligase.